A 338-amino-acid polypeptide reads, in one-letter code: Phenylalanine--tRNA ligase alpha subunit (338 aa).

Glutamate 253 contacts Mg(2+).

Belongs to the class-II aminoacyl-tRNA synthetase family. Phe-tRNA synthetase alpha subunit type 1 subfamily. In terms of assembly, tetramer of two alpha and two beta subunits. Mg(2+) is required as a cofactor.

The protein resides in the cytoplasm. The enzyme catalyses tRNA(Phe) + L-phenylalanine + ATP = L-phenylalanyl-tRNA(Phe) + AMP + diphosphate + H(+). The chain is Phenylalanine--tRNA ligase alpha subunit from Gloeobacter violaceus (strain ATCC 29082 / PCC 7421).